Reading from the N-terminus, the 158-residue chain is Large ribosomal subunit protein bL35m (158 aa).

It belongs to the bacterial ribosomal protein bL35 family.

Its subcellular location is the mitochondrion. This is Large ribosomal subunit protein bL35m (mrpl-35) from Caenorhabditis elegans.